The primary structure comprises 276 residues: 4-deoxy-L-threo-5-hexosulose-uronate ketol-isomerase (276 aa).

Residues His-194, His-196, Glu-201, and His-243 each coordinate Zn(2+).

This sequence belongs to the KduI family. It depends on Zn(2+) as a cofactor.

The enzyme catalyses 5-dehydro-4-deoxy-D-glucuronate = 3-deoxy-D-glycero-2,5-hexodiulosonate. Its pathway is glycan metabolism; pectin degradation; 2-dehydro-3-deoxy-D-gluconate from pectin: step 4/5. Catalyzes the isomerization of 5-dehydro-4-deoxy-D-glucuronate to 3-deoxy-D-glycero-2,5-hexodiulosonate. In Shouchella clausii (strain KSM-K16) (Alkalihalobacillus clausii), this protein is 4-deoxy-L-threo-5-hexosulose-uronate ketol-isomerase.